The primary structure comprises 275 residues: F420-dependent methylenetetrahydromethanopterin dehydrogenase (275 aa).

It belongs to the MTD family.

It catalyses the reaction 5,10-methylenetetrahydromethanopterin + oxidized coenzyme F420-(gamma-L-Glu)(n) + 2 H(+) = 5,10-methenyl-5,6,7,8-tetrahydromethanopterin + reduced coenzyme F420-(gamma-L-Glu)(n). It functions in the pathway one-carbon metabolism; methanogenesis from CO(2); 5,10-methylene-5,6,7,8-tetrahydromethanopterin from 5,10-methenyl-5,6,7,8-tetrahydromethanopterin (coenzyme F420 route): step 1/1. Catalyzes the reversible reduction of methenyl-H(4)MPT(+) to methylene-H(4)MPT. The protein is F420-dependent methylenetetrahydromethanopterin dehydrogenase of Methanobrevibacter smithii (strain ATCC 35061 / DSM 861 / OCM 144 / PS).